The primary structure comprises 666 residues: Protein translocase subunit SecA 2 (666 aa).

Residues Gln-119, 137 to 141 (GEGKS), and Asp-546 each bind ATP.

The protein belongs to the SecA family. In terms of assembly, monomer and homodimer. Part of the essential Sec protein translocation apparatus which comprises SecA, SecYEG and auxiliary proteins SecDF-YajC and YidC.

Its subcellular location is the cell inner membrane. It is found in the cytoplasm. The catalysed reaction is ATP + H2O + cellular proteinSide 1 = ADP + phosphate + cellular proteinSide 2.. Its function is as follows. Part of the Sec protein translocase complex. Interacts with the SecYEG preprotein conducting channel. Has a central role in coupling the hydrolysis of ATP to the transfer of proteins into and across the cell membrane, serving both as a receptor for the preprotein-SecB complex and as an ATP-driven molecular motor driving the stepwise translocation of polypeptide chains across the membrane. In Nitrosospira multiformis (strain ATCC 25196 / NCIMB 11849 / C 71), this protein is Protein translocase subunit SecA 2.